Consider the following 957-residue polypeptide: Serine-aspartate repeat-containing protein C (957 aa).

An N-terminal signal peptide occupies residues Met1 to Ala50. Residues Ala51–Arg166 form a disordered region. The segment at Ala51–Lys495 is ligand binding A region. Residues Gly56–Asn71 show a composition bias toward polar residues. Positions Lys72–Lys83 are enriched in basic and acidic residues. The segment covering Asp84–Pro114 has biased composition (polar residues). The segment covering Gln115–Asn132 has biased composition (low complexity). The segment covering Asp133–Lys164 has biased composition (polar residues). CNA-B domains are found at residues Lys496 to Pro606 and Lys607 to Thr717. The segment at Thr678 to Gly937 is disordered. 2 stretches are compositionally biased toward acidic residues: residues Thr685–Glu695 and Tyr712–Ser896. Positions Leu920 to Gly924 match the LPXTG sorting signal motif. Residues Glu922 to Gly937 show a composition bias toward low complexity. A Pentaglycyl murein peptidoglycan amidated threonine modification is found at Thr923. Residues Gly924–Lys957 constitute a propeptide, removed by sortase.

The protein belongs to the serine-aspartate repeat-containing protein (SDr) family. As to quaternary structure, homodimerizes; via N2-Domain. Interacts with host NRXN1; this interaction mediates bacterial attachment to host cells.

It localises to the secreted. The protein resides in the cell wall. Cell surface-associated calcium-binding protein which plays an important role in adhesion and pathogenesis. Mediates interactions with components of the extracellular matrix such as host NRXN1 to promote bacterial adhesion. The sequence is that of Serine-aspartate repeat-containing protein C (sdrC) from Staphylococcus aureus (strain MSSA476).